Reading from the N-terminus, the 311-residue chain is MKVAVLGAAGGIGQALALLLKLQLPAGTDLALYDIAPVTPGVAVDVSHIPTAVNVKGFSGEDPTPALEGADVVLISAGVARKPGMDRSDLFNINAGIVRGLIEKVAITCPKACVGIITNPVNTTVAIAAEVLKKAGVYDKRKLFGVTTLDVLRSETFVAELKGLNVSRTSVPVIGGHSGVTILPLLSQVQYAKWNEDEIEPLAKRIQNAGTEVVNAKAGGGSATLSMAQAAARFARSLVKGLSGETVVECTYVEGDGKYARFFSQPVRLGKEGVEEILPIGPLSNFEQQALENMLPTLRADIELGEKFING.

Residues 7-13 (GAAGGIG) and Asp-34 contribute to the NAD(+) site. Residues Arg-81 and Arg-87 each coordinate substrate. NAD(+) is bound by residues Asn-94 and 117-119 (ITN). Substrate-binding residues include Asn-119 and Arg-153. The active-site Proton acceptor is His-177. Met-227 contributes to the NAD(+) binding site.

Belongs to the LDH/MDH superfamily. MDH type 1 family. In terms of assembly, homodimer.

It catalyses the reaction (S)-malate + NAD(+) = oxaloacetate + NADH + H(+). Functionally, catalyzes the reversible oxidation of malate to oxaloacetate. In Haemophilus influenzae (strain 86-028NP), this protein is Malate dehydrogenase.